Consider the following 544-residue polypeptide: Tyrosyl-DNA phosphodiesterase 1 (544 aa).

The Nucleophile role is filled by histidine 182. Residue lysine 184 participates in substrate binding. The interaction with DNA stretch occupies residues 312–316 (SIGTS). Histidine 432 functions as the Proton donor/acceptor in the catalytic mechanism. Lysine 434 is a binding site for substrate.

Belongs to the tyrosyl-DNA phosphodiesterase family.

The protein resides in the nucleus. DNA repair enzyme that can remove a variety of covalent adducts from DNA through hydrolysis of a 3'-phosphodiester bond, giving rise to DNA with a free 3' phosphate. Catalyzes the hydrolysis of dead-end complexes between DNA and the topoisomerase I active site tyrosine residue. Hydrolyzes 3'-phosphoglycolates on protruding 3' ends on DNA double-strand breaks due to DNA damage by radiation and free radicals. Also cleaves 5' phosphotyrosyl adducts resulting from dead-end complexes between DNA and the active site tyrosine of topoisomerase II. Contributes to DNA repair after radiation damage. Acts on blunt-ended double-strand DNA breaks and on single-stranded DNA. May have low 3'exonuclease activity and may be able to remove a single nucleoside from the 3'end of DNA and RNA molecules with 3'hydroxyl groups. Has no exonuclease activity towards DNA or RNA with a 3'phosphate. In Saccharomyces cerevisiae (strain ATCC 204508 / S288c) (Baker's yeast), this protein is Tyrosyl-DNA phosphodiesterase 1 (TDP1).